The sequence spans 293 residues: 4-diphosphocytidyl-2-C-methyl-D-erythritol kinase (293 aa).

Residue K10 is part of the active site. Residue 96-106 (PIAAGLGGGSS) participates in ATP binding. D138 is an active-site residue.

It belongs to the GHMP kinase family. IspE subfamily.

The catalysed reaction is 4-CDP-2-C-methyl-D-erythritol + ATP = 4-CDP-2-C-methyl-D-erythritol 2-phosphate + ADP + H(+). Its pathway is isoprenoid biosynthesis; isopentenyl diphosphate biosynthesis via DXP pathway; isopentenyl diphosphate from 1-deoxy-D-xylulose 5-phosphate: step 3/6. Functionally, catalyzes the phosphorylation of the position 2 hydroxy group of 4-diphosphocytidyl-2C-methyl-D-erythritol. The chain is 4-diphosphocytidyl-2-C-methyl-D-erythritol kinase from Caulobacter sp. (strain K31).